Here is an 839-residue protein sequence, read N- to C-terminus: MSRFFVAGYNSDSSSEEEDLLSSDEELLSSSSEGEQETSDDDSLDFDDQSDSDSSDSDSDGRPSGPAYFLKKDFMKGGAGGDSDSDSEDEGRRVVKSAKDKLLDDMNESIEAINVARRSDTWTTVVSEFDKLGRLLVRAGQQSVSTPNAYIRCLADLEDYITATSENEKTEKSLNAAEARAFNMAKQRVRKQIKEYQAQYDLYRENPELFEREESVDIAAPSRSDVPVEDTTGRVLSPVFTILKQIAETRGKKNIDKYEQIKTLEDLLNDNLAKGSVFELISIYQMLLSIRFDASANQNFMPIEQWKNNEADLTSLIGLLESNKDTYQLSELGSTTDDIDIEPVANESGVKAIFGSITSLIDRLDDEFTRSLQNTDPHSIEYVQRLKDETTIYQLIVRGQSYIESITPAEVQQSVEQLSRVVLRRLEHIYYKPDQLIKANEAEAWKGISHESVIVSKDSTPAELIEGLSSFLTKHKNPVYAKHALLFSVYYYAVNNNYNRAKELFLDSQIFNKIHHADSSLQVQYNRAIVQLGLSAFRNGAVEESHKVLNEIVNSQRSKELLGQGFNSKYPNQATTVEKAKLLPFHQHINLELLECVYSTCSLLIEIPALAAATNSKDSRRKATTKSFKSKLEFHDRQFFTGPPESIKDHIVHASIALSKGDWAKAYQLLSSIKIWKLFPDNDDLLAMMKNQLQVEGLRTYIFSYKSIFSKLSLGKLSQIFELEADKVESIVQKMIETNEIGGTLDESKAFIQFASTEPQRSRLQELAIVMNEKVGLLTEKNEKTSSNGYGKKQPQQQQQQQQQQQQQQQQQKDLLQEDNSRFRYANVNTNNDEFQTTA.

The segment at 1-93 (MSRFFVAGYN…DSDSEDEGRR (93 aa)) is disordered. Composition is skewed to acidic residues over residues 14 to 27 (SSEE…DEEL) and 34 to 58 (GEQE…SDSD). The PCI domain maps to 585 to 759 (FHQHINLELL…AFIQFASTEP (175 aa)). The disordered stretch occupies residues 783–839 (EKTSSNGYGKKQPQQQQQQQQQQQQQQQQQKDLLQEDNSRFRYANVNTNNDEFQTTA). Over residues 794–812 (QPQQQQQQQQQQQQQQQQQ) the composition is skewed to low complexity. Positions 827 to 839 (NVNTNNDEFQTTA) are enriched in polar residues.

The protein belongs to the eIF-3 subunit C family. In terms of assembly, component of the eukaryotic translation initiation factor 3 (eIF-3) complex.

The protein resides in the cytoplasm. Functionally, component of the eukaryotic translation initiation factor 3 (eIF-3) complex, which is involved in protein synthesis of a specialized repertoire of mRNAs and, together with other initiation factors, stimulates binding of mRNA and methionyl-tRNAi to the 40S ribosome. The eIF-3 complex specifically targets and initiates translation of a subset of mRNAs involved in cell proliferation. The chain is Eukaryotic translation initiation factor 3 subunit C from Scheffersomyces stipitis (strain ATCC 58785 / CBS 6054 / NBRC 10063 / NRRL Y-11545) (Yeast).